The chain runs to 388 residues: Succinate--CoA ligase [ADP-forming] subunit beta (388 aa).

ATP-binding positions include Lys-46, 53-55, Glu-99, Cys-102, and Glu-107; that span reads GRG. The Mg(2+) site is built by Asn-199 and Asp-213. Residues Asn-264 and 321 to 323 each bind substrate; that span reads GIV.

It belongs to the succinate/malate CoA ligase beta subunit family. Heterotetramer of two alpha and two beta subunits. Mg(2+) serves as cofactor.

It catalyses the reaction succinate + ATP + CoA = succinyl-CoA + ADP + phosphate. It carries out the reaction GTP + succinate + CoA = succinyl-CoA + GDP + phosphate. It functions in the pathway carbohydrate metabolism; tricarboxylic acid cycle; succinate from succinyl-CoA (ligase route): step 1/1. Its function is as follows. Succinyl-CoA synthetase functions in the citric acid cycle (TCA), coupling the hydrolysis of succinyl-CoA to the synthesis of either ATP or GTP and thus represents the only step of substrate-level phosphorylation in the TCA. The beta subunit provides nucleotide specificity of the enzyme and binds the substrate succinate, while the binding sites for coenzyme A and phosphate are found in the alpha subunit. In Actinobacillus pleuropneumoniae serotype 7 (strain AP76), this protein is Succinate--CoA ligase [ADP-forming] subunit beta.